The sequence spans 398 residues: Putative isocitrate lyase subunit B (398 aa).

This sequence belongs to the isocitrate lyase/PEP mutase superfamily. Isocitrate lyase family. The cofactor is Mg(2+).

It catalyses the reaction D-threo-isocitrate = glyoxylate + succinate. Functionally, together with AceAa, they could catalyze the formation of succinate and glyoxylate from isocitrate. This chain is Putative isocitrate lyase subunit B (aceAb), found in Mycobacterium tuberculosis (strain ATCC 25618 / H37Rv).